Here is a 164-residue protein sequence, read N- to C-terminus: 3-hydroxyacyl-[acyl-carrier-protein] dehydratase FabZ (164 aa).

His61 is a catalytic residue.

It belongs to the thioester dehydratase family. FabZ subfamily.

It is found in the cytoplasm. The catalysed reaction is a (3R)-hydroxyacyl-[ACP] = a (2E)-enoyl-[ACP] + H2O. Functionally, involved in unsaturated fatty acids biosynthesis. Catalyzes the dehydration of short chain beta-hydroxyacyl-ACPs and long chain saturated and unsaturated beta-hydroxyacyl-ACPs. In Ralstonia nicotianae (strain ATCC BAA-1114 / GMI1000) (Ralstonia solanacearum), this protein is 3-hydroxyacyl-[acyl-carrier-protein] dehydratase FabZ.